The primary structure comprises 391 residues: Probable inactive allantoicase (391 aa).

It belongs to the allantoicase family.

Its function is as follows. The function of this enzyme is unclear as allantoicase activity is not known to exist in mammals. The protein is Probable inactive allantoicase of Homo sapiens (Human).